Here is a 316-residue protein sequence, read N- to C-terminus: Acetyl-coenzyme A carboxylase carboxyl transferase subunit alpha (316 aa).

In terms of domain architecture, CoA carboxyltransferase C-terminal spans 39 to 293; it reads RLQDKSESLT…REQLNSQLHM (255 aa).

Belongs to the AccA family. Acetyl-CoA carboxylase is a heterohexamer composed of biotin carboxyl carrier protein (AccB), biotin carboxylase (AccC) and two subunits each of ACCase subunit alpha (AccA) and ACCase subunit beta (AccD).

The protein localises to the cytoplasm. The catalysed reaction is N(6)-carboxybiotinyl-L-lysyl-[protein] + acetyl-CoA = N(6)-biotinyl-L-lysyl-[protein] + malonyl-CoA. It functions in the pathway lipid metabolism; malonyl-CoA biosynthesis; malonyl-CoA from acetyl-CoA: step 1/1. In terms of biological role, component of the acetyl coenzyme A carboxylase (ACC) complex. First, biotin carboxylase catalyzes the carboxylation of biotin on its carrier protein (BCCP) and then the CO(2) group is transferred by the carboxyltransferase to acetyl-CoA to form malonyl-CoA. This chain is Acetyl-coenzyme A carboxylase carboxyl transferase subunit alpha, found in Stutzerimonas stutzeri (strain A1501) (Pseudomonas stutzeri).